Reading from the N-terminus, the 311-residue chain is MQIYPLRFVPNKIDFDFMNFKKVSYSFSIILSLISLIWISIYKFNFGIDFVGGIVIEVRLDQAPDLPKMRAVLSALEIGEVVLQNFGSERDLSIRFGSSSEENLMKNIDIIKTSLRNNFPYNFEYRKVDFVGPQVGRQLIEAGAMAMLFSFLAIMVYIGVRFEWYFGFGILIALVHDVILALGFMSMTKLDFNLSTIAAVLTIIGYSVNDSVVIYDRIRENLRKYHKKNITEIINLSINETLSRTILTVITTLLANLALILFGGKAIHSFSVLVFFGIIAGTYSSIFISAPILTMFANRKFNKKVITQGKG.

Transmembrane regions (helical) follow at residues 23-42 (VSYSFSIILSLISLIWISIY), 140-160 (IEAGAMAMLFSFLAIMVYIGV), 164-184 (WYFGFGILIALVHDVILALGF), 194-214 (LSTIAAVLTIIGYSVNDSVVI), 246-266 (ILTVITTLLANLALILFGGKA), and 272-292 (VLVFFGIIAGTYSSIFISAPI).

The protein belongs to the SecD/SecF family. SecF subfamily. As to quaternary structure, forms a complex with SecD. Part of the essential Sec protein translocation apparatus which comprises SecA, SecYEG and auxiliary proteins SecDF-YajC and YidC.

It localises to the cell inner membrane. Functionally, part of the Sec protein translocase complex. Interacts with the SecYEG preprotein conducting channel. SecDF uses the proton motive force (PMF) to complete protein translocation after the ATP-dependent function of SecA. This Rickettsia prowazekii (strain Madrid E) protein is Protein translocase subunit SecF.